The chain runs to 81 residues: Putative membrane protein insertion efficiency factor (81 aa).

The disordered stretch occupies residues 59–81 (PWNPGGYDPVPPIKTSRSSSMAE).

This sequence belongs to the UPF0161 family.

Its subcellular location is the cell inner membrane. Its function is as follows. Could be involved in insertion of integral membrane proteins into the membrane. In Azotobacter vinelandii (strain DJ / ATCC BAA-1303), this protein is Putative membrane protein insertion efficiency factor.